The primary structure comprises 1296 residues: Phosphoribosylformylglycinamidine synthase (1296 aa).

A disordered region spans residues 300-325 (APFSGAATGSGGEIRDEGATGRGSKP). Residues 304–315 (GAATGSGGEIRD) and Ala-675 each bind ATP. Mg(2+)-binding residues include Glu-715, Asn-719, and Asp-885. Ser-887 serves as a coordination point for ATP. The 254-residue stretch at 1043–1296 (MAILREQGVN…MFRNARKNVG (254 aa)) folds into the Glutamine amidotransferase type-1 domain. Cys-1136 functions as the Nucleophile in the catalytic mechanism. Positions 1232 to 1253 (TQYPANPNGSPEGITGITSTDG) are disordered. Residues His-1261 and Glu-1263 contribute to the active site.

The protein in the N-terminal section; belongs to the FGAMS family. As to quaternary structure, monomer.

The protein resides in the cytoplasm. The catalysed reaction is N(2)-formyl-N(1)-(5-phospho-beta-D-ribosyl)glycinamide + L-glutamine + ATP + H2O = 2-formamido-N(1)-(5-O-phospho-beta-D-ribosyl)acetamidine + L-glutamate + ADP + phosphate + H(+). Its pathway is purine metabolism; IMP biosynthesis via de novo pathway; 5-amino-1-(5-phospho-D-ribosyl)imidazole from N(2)-formyl-N(1)-(5-phospho-D-ribosyl)glycinamide: step 1/2. Functionally, phosphoribosylformylglycinamidine synthase involved in the purines biosynthetic pathway. Catalyzes the ATP-dependent conversion of formylglycinamide ribonucleotide (FGAR) and glutamine to yield formylglycinamidine ribonucleotide (FGAM) and glutamate. In Pseudoalteromonas translucida (strain TAC 125), this protein is Phosphoribosylformylglycinamidine synthase.